Consider the following 662-residue polypeptide: 72 kDa type IV collagenase (662 aa).

Residues 1–29 (MEARLVWGVLVGPLRVLCVLCCLLGHAIA) form the signal peptide. The propeptide at 30–109 (APSPIIKFPG…PRCGNPDVAN (80 aa)) is activation peptide. A Cysteine switch motif is present at residues 100–107 (PRCGNPDV). Zn(2+) is bound at residue C102. The tract at residues 110–221 (YNFFPRKPKW…LWTLGEGQVV (112 aa)) is collagenase-like 1. Ca(2+) is bound by residues D134 and D168. Zn(2+) contacts are provided by H178 and D180. D185 and G186 together coordinate Ca(2+). Zn(2+) is bound at residue H193. G200, G202, and D204 together coordinate Ca(2+). Position 206 (H206) interacts with Zn(2+). The Ca(2+) site is built by D208, D209, and E211. The interval 222–396 (RVKYGNADGE…WGFCPDQGYS (175 aa)) is collagen-binding. 3 consecutive Fibronectin type-II domains span residues 228 to 276 (ADGE…FCPH), 286 to 334 (GDGQ…FCPE), and 344 to 392 (SEGA…FCPD). Cystine bridges form between C233-C259, C247-C274, C291-C317, C305-C332, C349-C375, and C363-C390. The collagenase-like 2 stretch occupies residues 397-467 (LFLVAAHEFG…GPTPTLGPVT (71 aa)). H403 serves as a coordination point for Zn(2+). E404 is an active-site residue. H407 and H413 together coordinate Zn(2+). A required for inhibitor TIMP2 binding region spans residues 414–662 (SQDPGALMAP…GSIKSDWLGC (249 aa)). An intrachain disulfide couples C471 to C662. 4 Hemopexin repeats span residues 474–518 (DIVF…WPEL), 519–565 (PEKI…GLPP), 567–615 (VQQV…WNAI), and 616–662 (PDNL…WLGC). Ca(2+) is bound by residues D478, D523, and D571. N575 is a glycosylation site (N-linked (GlcNAc...) asparagine). D620 is a binding site for Ca(2+). N644 is a glycosylation site (N-linked (GlcNAc...) asparagine).

The protein belongs to the peptidase M10A family. Interacts (via the C-terminal hemopexin-like domains-containing region) with the integrin alpha-V/beta-3; the interaction promotes vascular invasion in angiogenic vessels and melamoma cells. Interacts (via the C-terminal PEX domain) with TIMP2 (via the C-terminal); the interaction inhibits the degradation activity. Interacts with GSK3B. Ca(2+) serves as cofactor. Requires Zn(2+) as cofactor. Phosphorylation on multiple sites modulates enzymatic activity. Phosphorylated by PKC in vitro. In terms of processing, the propeptide is processed by MMP14 (MT-MMP1) and MMP16 (MT-MMP3). Autocatalytic cleavage in the C-terminal produces the anti-angiogenic peptide, PEX. This processing appears to be facilitated by binding integrin integrinv/beta3.

Its subcellular location is the secreted. It is found in the extracellular space. The protein localises to the extracellular matrix. It localises to the membrane. The protein resides in the nucleus. It catalyses the reaction Cleavage of gelatin type I and collagen types IV, V, VII, X. Cleaves the collagen-like sequence Pro-Gln-Gly-|-Ile-Ala-Gly-Gln.. Ubiquitinous metalloproteinase that is involved in diverse functions such as remodeling of the vasculature, angiogenesis, tissue repair, tumor invasion, inflammation, and atherosclerotic plaque rupture. As well as degrading extracellular matrix proteins, can also act on several nonmatrix proteins such as big endothelial 1 and beta-type CGRP promoting vasoconstriction. Also cleaves KISS at a Gly-|-Leu bond. Appears to have a role in myocardial cell death pathways. Contributes to myocardial oxidative stress by regulating the activity of GSK3beta. Cleaves GSK3beta in vitro. Involved in the formation of the fibrovascular tissues. Functionally, PEX, the C-terminal non-catalytic fragment of MMP2, possesses anti-angiogenic and anti-tumor properties and inhibits cell migration and cell adhesion to FGF2 and vitronectin. Ligand for integrin alpha-v/beta3 on the surface of blood vessels. The chain is 72 kDa type IV collagenase (Mmp2) from Rattus norvegicus (Rat).